The following is a 396-amino-acid chain: Elongation factor Tu (396 aa).

Residues 10 to 205 (KPHVNIGTIG…ACDDSIPDPE (196 aa)) form the tr-type G domain. The G1 stretch occupies residues 19–26 (GHVDHGKT). 19 to 26 (GHVDHGKT) contacts GTP. Position 26 (threonine 26) interacts with Mg(2+). The interval 62 to 66 (GITIN) is G2. A G3 region spans residues 83–86 (DAPG). GTP contacts are provided by residues 83-87 (DAPGH) and 138-141 (NKCD). The interval 138–141 (NKCD) is G4. Residues 175-177 (SAL) form a G5 region.

Belongs to the TRAFAC class translation factor GTPase superfamily. Classic translation factor GTPase family. EF-Tu/EF-1A subfamily. Monomer.

It localises to the cytoplasm. The catalysed reaction is GTP + H2O = GDP + phosphate + H(+). GTP hydrolase that promotes the GTP-dependent binding of aminoacyl-tRNA to the A-site of ribosomes during protein biosynthesis. This is Elongation factor Tu from Corynebacterium diphtheriae (strain ATCC 700971 / NCTC 13129 / Biotype gravis).